A 162-amino-acid chain; its full sequence is Transcription elongation factor GreA (162 aa).

Positions 44 to 69 form a coiled coil; sequence SENAEYEAAREKQAFVEARIKHLEDI.

Belongs to the GreA/GreB family.

Its function is as follows. Necessary for efficient RNA polymerase transcription elongation past template-encoded arresting sites. The arresting sites in DNA have the property of trapping a certain fraction of elongating RNA polymerases that pass through, resulting in locked ternary complexes. Cleavage of the nascent transcript by cleavage factors such as GreA or GreB allows the resumption of elongation from the new 3'terminus. GreA releases sequences of 2 to 3 nucleotides. In Rickettsia bellii (strain RML369-C), this protein is Transcription elongation factor GreA.